Here is a 440-residue protein sequence, read N- to C-terminus: tRNA-2-methylthio-N(6)-dimethylallyladenosine synthase (440 aa).

One can recognise an MTTase N-terminal domain in the interval 4–120 (NYVYIETFGC…LNDMVLAAER (117 aa)). [4Fe-4S] cluster is bound by residues Cys13, Cys49, Cys83, Cys158, Cys162, and Cys165. A Radical SAM core domain is found at 144 to 374 (GTARISSFVT…QALQKRTTME (231 aa)). The region spanning 377-439 (DVLLGTRQTV…QNSLLGELLP (63 aa)) is the TRAM domain.

This sequence belongs to the methylthiotransferase family. MiaB subfamily. As to quaternary structure, monomer. It depends on [4Fe-4S] cluster as a cofactor.

The protein resides in the cytoplasm. The enzyme catalyses N(6)-dimethylallyladenosine(37) in tRNA + (sulfur carrier)-SH + AH2 + 2 S-adenosyl-L-methionine = 2-methylsulfanyl-N(6)-dimethylallyladenosine(37) in tRNA + (sulfur carrier)-H + 5'-deoxyadenosine + L-methionine + A + S-adenosyl-L-homocysteine + 2 H(+). Its function is as follows. Catalyzes the methylthiolation of N6-(dimethylallyl)adenosine (i(6)A), leading to the formation of 2-methylthio-N6-(dimethylallyl)adenosine (ms(2)i(6)A) at position 37 in tRNAs that read codons beginning with uridine. In Pelobacter propionicus (strain DSM 2379 / NBRC 103807 / OttBd1), this protein is tRNA-2-methylthio-N(6)-dimethylallyladenosine synthase.